We begin with the raw amino-acid sequence, 2605 residues long: MMLGLVQLLVGFVVAWEAVELVLRHGLLLSVFKLAILAALAAAAGCVAIIFFARAVAWVLQRAAKLSIGCRSYGFNYLRDITISSPKGAVESICIGEIRLGLRKPITQLGFTVLTHGPILQLQISDLDVVLRQPVKSTNKKKPAPRKPISTTTAKAKGKSKGQVKWRLITSMASLLSLSIVELRLKAPKAALGIKDLKTDISKTGGLDPVLNVQVNIIPLFVQALDSDSIGNNTLVFSKLDWWVSGQYCSAMDTSDHSSFLFEDISLSCDLHQRDKAIRVKNLDLMLGPIVVNLEEKLLAKKKPSASTVAEQKDEPSVDNKSAARSEGGKLASLNKKISMFPEKVSFNMSKLVLKFLPKDHGLSINNEIGSISLRCTRLQPQDFGEVTTHIRLETDVTEIHLLMDGATSVLEVVKVSTVVSANIPSQPALPVQAEVDIKISGFQCNLIVSRIKPLIRINSDKKKPLVLHENPQQKKAPKEKLALSLACTMSVPELTLVLHSLDDVPLYHCIFQSANVSASKMIDRGTQLHGKLGDLKFLVPSKHQQSMKEGASGTLLHISHSTLDLEQNDPGQDNDEDHAKSAISVNISGIRMHFCFSYLESLCATAMSYKVFMKSILPPKKRSVQENASQKSTKKAKRALLLKINVAQCSIVYDGEMRLEDMSIADPKRVNFGSQGGRVVIINEANGSPRMAYVNSTSLPDHKNVHFSTSLEIYQFGVSLNKAKHTMQVELENFRLTHKEDQLDNKPVEETKLFDVRKAKFVQRSGGLNDIAACSLINVTDIAVRWEPDPYLELLEVATRLKSVLHRMKLQNSVTEVKDNIEHGYSFQKGITLRPWSARKAQKKRESVIAIDLESLKISGELADGVEAMITVGYIFSENAKIGVLVEGISVSFCGAWILKSSRMQLSRIPISVSDSNSDKKLQSAAACDWVIQCRDVNICLPFRLQLRAIDDAVEDTLRAFKLISAAKTSVLFPEKKSSTTSSKKSKPKSTAFRYVRIIVRDLIAEIEEEPMQGWLDEHMILMKNVFCESTVRLNLLDELSSGKNKDSPKAKLDSSEKNSGCPDVDAYVPGTHSIEKLREEIYRQAFQSYYQACQKLPVSEGSGACSSGFQSGFKMSTRRASVMSVCAKDVDVSLSKIDGGDEGMISFIKSLDPVCDKDDIPFSRLYGSNFSLKTRSLSAYLRDYTFPLFSGTNGKCDGRLVLGQQATCFQPQARQDVYVGKWWRVNLLRSATGYTPPMKTYADIPLYFKKAEVSFGVGYEPVFADVSYAFTCALRRANLAKRWYFERPEPPRRERSLPWWDDMRNYIHGKFKLCFNETKWHLPASTSPYEKLDELLIITDFMEIHYVDGYVSLSSKYLRVYLTSLESLAKKSSLEIPHHPAIPFLETPSFFMDISIEWGCDSGNPMDHFIFALPAEGKPRDKVFDAFRSTSLSLKWSFSLKPYTTEPIEHQKKSNLNTTAPTVNVGVHDLAWLMKWWNLVFLPPHKLRLFSRFPRFGVPRFVRSGNLPLDRVMTEQCIRFDAMQLQINNMPLQADDPAKGLTLHFTKFRYEIAFSRGKQIFTFDCKREPLDLVYQGIDLHLLKVFINRIPESSTSMDSKIENKVLQTKDKDSLGCEKGKKKTSPTEKSRDDGFFLYSDYFTIRKQTPKADAARLSAWQEDGRKKTEMPLIKSEFDGGDESDHDQSGSDDEGFNVVVADSCQRVFVYGLKILWNLENRAAVLSWVGGLTQAFQPPKPSPSRQYTQTKILEKKQLIKEAEMSKDGALSSVSSTSQPSEPQQIKSSESPPSNGSGKPDLTSSSENALKRSNNSDSEEEGTRHFMVNVVQPQFNLHSEEANGRFLLAAGSGRVMVRSFHSIVQVGQEMFEKAIGSSNDATGGTGPEMTWSRVELSVMLEHVQAHVAPTDVDPGAGIQWLPKIHRRSSEVKRTGALLERVFMPCQMYFRYTRHKGGTPELKVKPLKELTFNSPDITAGMTSRQFQVMMDVLTNLLFARTPKKPKSNLSYPLDNDDDNIEEASDAVVPDGVEEVVLAKIGVEVKERARKLLLDDIRALSICGETSHGQSQSPKANDIAWIVTGSRLMLVKQLKKRLVNVRNGRKEAYSMLRTAMQKAAQLRLMEKEKNKSPSFAMRISVRIKKIVWSMLADGKSFSEAEINDMIFEFDRDYKDIGIAQLTTKLFVLKNGLANAKSDTVVSPWNPPAEWGKNAMLRVNAWQGAPTGGNPVIESFLVDIYPLKIYLTEAMYRMMWGYFFPGDEQQPQKRQELFKVSTTAGTRRKKNTSVAETNSPNNQSSKETTFAQKPELRRTSSFDRTWEETVAESVANELVSQMEGQTNTQYEPQDAAKDSKLLRPVRSTREDKKIVEPNELKQSRPQKMMDFRNIKISQVELQLTYEGLPFAVSDVRLLMDTFHREDFTGTWARLFSRVKKHIVWGVLKSVTGMQGKKFKAKSSSQKEPSTALISAADFNLSDSDGDEAGSSDQLPAFLKKPSDGAGDGFATSVKGLFSTQKKKAMAFVLKTMKGDADHDFHGERSENEIEFSPFARQLTITKTKKLIRRHTKKLNKSKVHKVTATELEVAELPPRAPGYNTDSSSDSSSAETSPKD.

An N-terminal signal peptide occupies residues 1–43 (MMLGLVQLLVGFVVAWEAVELVLRHGLLLSVFKLAILAALAAA). Residues 137-158 (STNKKKPAPRKPISTTTAKAKG) form a disordered region. Residues asparagine 232, asparagine 320, asparagine 348, asparagine 516, asparagine 587, asparagine 628, asparagine 696, asparagine 779, asparagine 1171, asparagine 1318, and asparagine 1459 are each glycosylated (N-linked (GlcNAc...) asparagine). The interval 305 to 326 (SASTVAEQKDEPSVDNKSAARS) is disordered. A compositionally biased stretch (basic and acidic residues) spans 311-326 (EQKDEPSVDNKSAARS). Residues 1761-1818 (MSKDGALSSVSSTSQPSEPQQIKSSESPPSNGSGKPDLTSSSENALKRSNNSDSEEEG) are disordered. Residues 1768-1781 (SSVSSTSQPSEPQQ) show a composition bias toward low complexity. Residues 1782–1812 (IKSSESPPSNGSGKPDLTSSSENALKRSNNS) are compositionally biased toward polar residues. Residues asparagine 1791, asparagine 1810, asparagine 2003, asparagine 2280, and asparagine 2291 are each glycosylated (N-linked (GlcNAc...) asparagine). Disordered regions lie at residues 2269–2312 (VSTT…SSFD) and 2332–2361 (EGQTNTQYEPQDAAKDSKLLRPVRSTREDK). Over residues 2281–2300 (TSVAETNSPNNQSSKETTFA) the composition is skewed to polar residues. 2 stretches are compositionally biased toward basic and acidic residues: residues 2303–2312 (PELRRTSSFD) and 2343–2361 (DAAKDSKLLRPVRSTREDK). N-linked (GlcNAc...) asparagine glycans are attached at residues asparagine 2468 and asparagine 2564. Positions 2574–2605 (TELEVAELPPRAPGYNTDSSSDSSSAETSPKD) are disordered.

The protein belongs to the SABRE family. In terms of tissue distribution, mature pollen-specific.

The protein resides in the secreted. Its subcellular location is the golgi apparatus. In terms of biological role, may be involved in membrane trafficking. Required for tip growth in pollen tubes and root hairs. The chain is Protein ABERRANT POLLEN TRANSMISSION 1 from Zea mays (Maize).